Consider the following 537-residue polypeptide: Probable quinate permease (537 aa).

The Cytoplasmic segment spans residues 1–22; sequence MSILSLVEDRPTPKEVYNWKIY. Residues 23–43 traverse the membrane as a helical segment; it reads LLAAVASCTSCMIGYDSAFIG. Over 44–74 the chain is Extracellular; it reads TTISLQSFKDEFDWDSMSAAHQDLVSSNIVS. The helical transmembrane segment at 75-95 threads the bilayer; it reads LYQAGAFFGAFFAYPIGHFWG. Topologically, residues 96 to 97 are cytoplasmic; the sequence is RK. Residues 98 to 118 form a helical membrane-spanning segment; that stretch reads WGLMVSALIFTLGAGIMLGTN. Over 119-130 the chain is Extracellular; it reads GDRGFGLLYGGR. The chain crosses the membrane as a helical span at residues 131–151; that stretch reads VLAGLGVGAGSNITPIYISEL. The Cytoplasmic segment spans residues 152–159; sequence SPPAIRGR. A helical transmembrane segment spans residues 160-180; the sequence is LVGVYELGWQIGGLVGFWICY. The Extracellular segment spans residues 181–193; the sequence is GVDETLPPSHKQW. A helical transmembrane segment spans residues 194 to 214; that stretch reads IIPFAVQLIPSGLLIIGALFL. Residues 215 to 285 lie on the Cytoplasmic side of the membrane; sequence KESPRWLFLR…AWTNKKILYR (71 aa). A helical membrane pass occupies residues 286–306; it reads LFLGSMLFFWQNGSGINAINY. Residues 307-325 lie on the Extracellular side of the membrane; that stretch reads YSPTVFKSIGVTGSNTSLF. The helical transmembrane segment at 326 to 346 threads the bilayer; it reads TTGIFGVVKTVVTFIWLLWLI. The Cytoplasmic segment spans residues 347–352; that stretch reads DRVGRR. Residues 353-373 traverse the membrane as a helical segment; sequence LLLLIGAAGGSICLWIVGAYI. Over 374-387 the chain is Extracellular; it reads KIARPSERENKQMD. The helical transmembrane segment at 388–408 threads the bilayer; the sequence is GGGIAAMFFFYLWTVFYTPSW. Topologically, residues 409-456 are cytoplasmic; sequence NGTPWVINSEMFDPNIRSLAQACAAGSNWLWNFLISRFTPQMFAKMDY. A helical membrane pass occupies residues 457 to 477; it reads GVYFFFASLMILSIIFVFFLI. Residues 478–537 are Extracellular-facing; sequence PETKGIPLESMDRLFETQPIWRAHGTLLKQIREDEERFRHDLEDSGFVKSTDRQVEVVDA.

It belongs to the major facilitator superfamily. Sugar transporter (TC 2.A.1.1) family. As to quaternary structure, interacts with creB. Post-translationally, ubiquitinated. Deubiquitinated by creB, probably to control its activity or amount.

The protein localises to the cell membrane. Functionally, integral membrane transporter that imports quinic acid to be catabolized as a carbon source. This Aspergillus flavus (strain ATCC 200026 / FGSC A1120 / IAM 13836 / NRRL 3357 / JCM 12722 / SRRC 167) protein is Probable quinate permease (qutD).